Reading from the N-terminus, the 220-residue chain is Protein-L-isoaspartate O-methyltransferase (220 aa).

S65 is a catalytic residue.

Belongs to the methyltransferase superfamily. L-isoaspartyl/D-aspartyl protein methyltransferase family.

Its subcellular location is the cytoplasm. It carries out the reaction [protein]-L-isoaspartate + S-adenosyl-L-methionine = [protein]-L-isoaspartate alpha-methyl ester + S-adenosyl-L-homocysteine. Its function is as follows. Catalyzes the methyl esterification of L-isoaspartyl residues in peptides and proteins that result from spontaneous decomposition of normal L-aspartyl and L-asparaginyl residues. It plays a role in the repair and/or degradation of damaged proteins. This chain is Protein-L-isoaspartate O-methyltransferase (pcm), found in Pyrococcus horikoshii (strain ATCC 700860 / DSM 12428 / JCM 9974 / NBRC 100139 / OT-3).